Consider the following 200-residue polypeptide: Glycerol-3-phosphate acyltransferase (200 aa).

4 helical membrane passes run 4–24 (ALLA…YWVG), 70–90 (ALGS…FAVI), 110–130 (LGIL…VWLL), and 158–178 (QPLP…GAHR).

It belongs to the PlsY family. As to quaternary structure, probably interacts with PlsX.

The protein localises to the cell inner membrane. It catalyses the reaction an acyl phosphate + sn-glycerol 3-phosphate = a 1-acyl-sn-glycero-3-phosphate + phosphate. The protein operates within lipid metabolism; phospholipid metabolism. Its function is as follows. Catalyzes the transfer of an acyl group from acyl-phosphate (acyl-PO(4)) to glycerol-3-phosphate (G3P) to form lysophosphatidic acid (LPA). This enzyme utilizes acyl-phosphate as fatty acyl donor, but not acyl-CoA or acyl-ACP. The protein is Glycerol-3-phosphate acyltransferase of Synechococcus sp. (strain JA-2-3B'a(2-13)) (Cyanobacteria bacterium Yellowstone B-Prime).